Consider the following 96-residue polypeptide: Co-chaperonin GroES (96 aa).

This sequence belongs to the GroES chaperonin family. Heptamer of 7 subunits arranged in a ring. Interacts with the chaperonin GroEL.

Its subcellular location is the cytoplasm. Functionally, together with the chaperonin GroEL, plays an essential role in assisting protein folding. The GroEL-GroES system forms a nano-cage that allows encapsulation of the non-native substrate proteins and provides a physical environment optimized to promote and accelerate protein folding. GroES binds to the apical surface of the GroEL ring, thereby capping the opening of the GroEL channel. This chain is Co-chaperonin GroES, found in Hyphomonas neptunium (strain ATCC 15444).